A 460-amino-acid chain; its full sequence is tRNA modification GTPase MnmE (460 aa).

(6S)-5-formyl-5,6,7,8-tetrahydrofolate-binding residues include Arg-29, Glu-91, and Lys-132. The TrmE-type G domain maps to 227-383; sequence GISIALIGKT…LIDTIIKKCG (157 aa). Residue Asn-237 participates in K(+) binding. GTP-binding positions include 237–242, 256–262, and 281–284; these read NVGKSS, TNIPGTT, and DTAG. A Mg(2+)-binding site is contributed by Ser-241. Positions 256, 258, and 261 each coordinate K(+). Residue Thr-262 participates in Mg(2+) binding. Lys-460 contributes to the (6S)-5-formyl-5,6,7,8-tetrahydrofolate binding site.

This sequence belongs to the TRAFAC class TrmE-Era-EngA-EngB-Septin-like GTPase superfamily. TrmE GTPase family. In terms of assembly, homodimer. Heterotetramer of two MnmE and two MnmG subunits. K(+) is required as a cofactor.

It localises to the cytoplasm. Functionally, exhibits a very high intrinsic GTPase hydrolysis rate. Involved in the addition of a carboxymethylaminomethyl (cmnm) group at the wobble position (U34) of certain tRNAs, forming tRNA-cmnm(5)s(2)U34. The polypeptide is tRNA modification GTPase MnmE (Prochlorococcus marinus (strain MIT 9215)).